The sequence spans 565 residues: Proline--tRNA ligase (565 aa).

Belongs to the class-II aminoacyl-tRNA synthetase family. ProS type 1 subfamily. Homodimer.

The protein resides in the cytoplasm. The enzyme catalyses tRNA(Pro) + L-proline + ATP = L-prolyl-tRNA(Pro) + AMP + diphosphate. In terms of biological role, catalyzes the attachment of proline to tRNA(Pro) in a two-step reaction: proline is first activated by ATP to form Pro-AMP and then transferred to the acceptor end of tRNA(Pro). As ProRS can inadvertently accommodate and process non-cognate amino acids such as alanine and cysteine, to avoid such errors it has two additional distinct editing activities against alanine. One activity is designated as 'pretransfer' editing and involves the tRNA(Pro)-independent hydrolysis of activated Ala-AMP. The other activity is designated 'posttransfer' editing and involves deacylation of mischarged Ala-tRNA(Pro). The misacylated Cys-tRNA(Pro) is not edited by ProRS. The protein is Proline--tRNA ligase of Lactobacillus delbrueckii subsp. bulgaricus (strain ATCC BAA-365 / Lb-18).